A 451-amino-acid polypeptide reads, in one-letter code: Porin AaxA (451 aa).

The N-terminal stretch at 1 to 27 is a signal peptide; it reads MASFHSSLLTALCTLCTYGILTMPAYG.

Belongs to the OprB family.

The protein localises to the cell outer membrane. Functionally, facilitates L-arginine uptake, as part of the AaxABC system. The arginine uptake by the bacterium in the macrophage may be a virulence factor against the host innate immune response. In Chlamydia caviae (strain ATCC VR-813 / DSM 19441 / 03DC25 / GPIC) (Chlamydophila caviae), this protein is Porin AaxA (aaxA).